The primary structure comprises 1429 residues: Autophagy-related protein 11 (1429 aa).

The disordered stretch occupies residues 71–99 (TQRSQPGASSPPLSELPLPRYNAHTPPNS). Residues 80 to 89 (SPPLSELPLP) show a composition bias toward low complexity. 4 coiled-coil regions span residues 143–173 (VMLR…KEWS), 553–590 (DDLL…QTQA), 632–815 (LETL…LEDI), and 851–989 (EGDM…RLES). Residues 1024-1061 (DGTMHIQRTPRSERSLATTANPNDSDPSSSLRRSSTLN) are disordered. The span at 1042 to 1061 (TANPNDSDPSSSLRRSSTLN) shows a compositional bias: low complexity. The stretch at 1105–1143 (ADAVYRRVKDVEHMARKLQREARAYREKAHSFQKEAHDK) forms a coiled coil. Residues 1209-1229 (SKSLQHDQAGETRKDGARGET) show a composition bias toward basic and acidic residues. Disordered regions lie at residues 1209–1241 (SKSL…DNPF) and 1336–1429 (SSRG…LIGP). Residues 1230 to 1239 (ESLDDDENDN) are compositionally biased toward acidic residues. Composition is skewed to polar residues over residues 1345–1372 (ASET…QHMS) and 1383–1393 (QETPQQTNSIS).

This sequence belongs to the ATG11 family. In terms of assembly, homodimer.

It is found in the preautophagosomal structure membrane. The protein resides in the vacuole membrane. Functionally, involved in cytoplasm to vacuole transport (Cvt), pexophagy, mitophagy and nucleophagy. Recruits mitochondria for their selective degradation via autophagy (mitophagy) during starvation. Works as scaffold proteins that recruit ATG proteins to the pre-autophagosome (PAS), the site of vesicle/autophagosome formation. Required for the Cvt vesicles completion. The polypeptide is Autophagy-related protein 11 (apg-8) (Neurospora crassa (strain ATCC 24698 / 74-OR23-1A / CBS 708.71 / DSM 1257 / FGSC 987)).